A 125-amino-acid polypeptide reads, in one-letter code: Scinderin (125 aa).

Y13 is modified (phosphotyrosine). A 1,2-diacyl-sn-glycero-3-phospho-(1D-myo-inositol-4,5-bisphosphate) contacts are provided by residues 23–30 (KGGLKYKA) and 49–57 (RLLHVKGRR). One copy of the Gelsolin-like 1 repeat lies at 59-99 (VRATEVPLSWDSFNKGDCFIIDLGSEIYQWFGSSCNKYERL).

Belongs to the villin/gelsolin family.

The protein localises to the cytoplasm. It is found in the cytoskeleton. Its subcellular location is the cell projection. It localises to the podosome. Ca(2+)-dependent actin filament-severing protein that has a regulatory function in exocytosis by affecting the organization of the microfilament network underneath the plasma membrane. In vitro, also has barbed end capping and nucleating activities in the presence of Ca(2+). Severing activity is inhibited by phosphatidylinositol 4,5-bis-phosphate (PIP2). Required for megakaryocyte differentiation, maturation, polyploidization and apoptosis with the release of platelet-like particles. Plays a role in osteoclastogenesis (OCG) and actin cytoskeletal organization in osteoclasts. Regulates chondrocyte proliferation and differentiation. Inhibits cell proliferation and tumorigenesis. Signaling is mediated by MAPK, p38 and JNK pathways. This Sus scrofa (Pig) protein is Scinderin (SCIN).